Consider the following 729-residue polypeptide: Fibroblast growth factor receptor 2 (729 aa).

A signal peptide spans 1–21; the sequence is MFSWSYLMGLVMVATATLSLA. The Extracellular segment spans residues 22-285; it reads RPSYNIAEDT…ELDSSSEYTE (264 aa). The segment at 29–62 is disordered; the sequence is EDTTLEPEDANSSGDDEDDNDGSEDFTNDNNHMR. The segment covering 31-55 has biased composition (acidic residues); sequence TTLEPEDANSSGDDEDDNDGSEDFT. N39 carries N-linked (GlcNAc...) asparagine glycosylation. Ig-like C2-type domains lie at 64–157 and 166–268; these read PYWT…YHLD and PILQ…AWLT. The heparin-binding stretch occupies residues 71-88; sequence KLEKKLHAVPAANTVKFR. Cysteines 89 and 141 form a disulfide. N-linked (GlcNAc...) asparagine glycans are attached at residues N138, N151, N175, N207, N228, N241, and N256. C188 and C252 are oxidised to a cystine. Residues 286 to 306 form a helical membrane-spanning segment; it reads IAIYCVGGFLITCMIGTIMVC. Topologically, residues 307–729 are cytoplasmic; sequence HMKGRGKKSD…SQHTNGTIKT (423 aa). Y374 is modified (phosphotyrosine; by autocatalysis). Residues 389–678 form the Protein kinase domain; it reads LTLGKPLGEG…LTQTTNEEYL (290 aa). ATP-binding positions include 395-403, K425, 473-475, and N479; these read LGEGCFGQV and EYA. At Y494 the chain carries Phosphotyrosine; by autocatalysis. The active-site Proton acceptor is the D534. Y564, Y565, and Y677 each carry phosphotyrosine; by autocatalysis. The disordered stretch occupies residues 683–729; the sequence is PLEQYSPSYPDTRSSCSSGDDSVFSPDAMPYDPCLPKSQHTNGTIKT. The span at 693–707 shows a compositional bias: low complexity; sequence DTRSSCSSGDDSVFS. The segment covering 720–729 has biased composition (polar residues); the sequence is SQHTNGTIKT.

The protein belongs to the protein kinase superfamily. Tyr protein kinase family. Fibroblast growth factor receptor subfamily. Monomer. Homodimer after ligand binding. Autophosphorylated. Binding of FGF family members together with heparan sulfate proteoglycan or heparin promotes receptor dimerization and autophosphorylation on tyrosine residues. Autophosphorylation occurs in trans between the two FGFR molecules present in the dimer. Post-translationally, N-glycosylated in the endoplasmic reticulum. The N-glycan chains undergo further maturation to an Endo H-resistant form in the Golgi apparatus. In terms of processing, ubiquitinated. FGFR2 is rapidly ubiquitinated after autophosphorylation, leading to internalization and degradation. Subject to degradation both in lysosomes and by the proteasome.

It is found in the cell membrane. The protein localises to the golgi apparatus. It localises to the cytoplasmic vesicle. The catalysed reaction is L-tyrosyl-[protein] + ATP = O-phospho-L-tyrosyl-[protein] + ADP + H(+). Its activity is regulated as follows. Present in an inactive conformation in the absence of bound ligand. Ligand binding leads to dimerization and activation by autophosphorylation on tyrosine residues. Functionally, tyrosine-protein kinase that acts as a cell-surface receptor for fibroblast growth factors and plays an essential role in the regulation of cell proliferation, differentiation, migration and apoptosis, and in the regulation of embryonic development. Required for normal embryonic patterning, limb bud development, lung morphogenesis, osteogenesis and skin development. Plays an essential role in the regulation of osteoblast differentiation, proliferation and apoptosis, and is required for normal skeleton development. Promotes cell proliferation in keratinocytes and immature osteoblasts, but promotes apoptosis in differentiated osteoblasts. Phosphorylates PLCG1, FRS2 and PAK4. Ligand binding leads to the activation of several signaling cascades. Activation of PLCG1 leads to the production of the cellular signaling molecules diacylglycerol and inositol 1,4,5-trisphosphate. Phosphorylation of FRS2 triggers recruitment of GRB2, GAB1, PIK3R1 and SOS1, and mediates activation of RAS, MAPK1/ERK2, MAPK3/ERK1 and the MAP kinase signaling pathway, as well as of the AKT1 signaling pathway. FGFR2 signaling is down-regulated by ubiquitination, internalization and degradation. Mutations that lead to constitutive kinase activation or impair normal FGFR2 maturation, internalization and degradation lead to aberrant signaling. Over-expressed FGFR2 promotes activation of STAT1. The polypeptide is Fibroblast growth factor receptor 2 (FGFR2) (Notophthalmus viridescens (Eastern newt)).